A 429-amino-acid polypeptide reads, in one-letter code: Stromal membrane-associated protein 2 (429 aa).

Residues 13-137 (QAVLANLLLE…LDINAFRKEK (125 aa)) form the Arf-GAP domain. The C4-type zinc-finger motif lies at 28-51 (CADCQSKGPRWASWNIGVFICIRC). The residue at position 127 (Ser127) is a Phosphoserine. Positions 138–172 (DNKWKRGSEPAPEKKMEPVVFEKVKMPQKKEDPQL) are enriched in basic and acidic residues. Disordered regions lie at residues 138 to 181 (DNKW…PKSK) and 217 to 263 (VSSP…KKQL). Positions 163-232 (MPQKKEDPQL…SVSRKVVGSM (70 aa)) are interaction with clathrin heavy chains. The span at 217-231 (VSSPSSSVSRKVVGS) shows a compositional bias: low complexity. Residues Ser219, Ser223, Ser225, Ser231, and Ser240 each carry the phosphoserine modification. Over residues 253–263 (SKSEETSKKQL) the composition is skewed to basic and acidic residues. The tract at residues 340–429 (MGGMQASMMG…NQTLSPQMWK (90 aa)) is interaction with PICALM.

As to quaternary structure, interacts with ARF1. Interacts with PICALM and clathrin heavy chains.

Its subcellular location is the cytoplasm. Its function is as follows. GTPase activating protein that acts on ARF1. Can also activate ARF6 (in vitro). May play a role in clathrin-dependent retrograde transport from early endosomes to the trans-Golgi network. This Bos taurus (Bovine) protein is Stromal membrane-associated protein 2 (SMAP2).